The primary structure comprises 259 residues: Sporulation-specific protein SPO7 (259 aa).

The tract at residues 1–40 (MEPESIGDVGNHAQDDSASIVSGPRRRSTSKTSSAKNIRN) is disordered. The Cytoplasmic portion of the chain corresponds to 1-72 (MEPESIGDVG…RQAHEQKILK (72 aa)). A helical transmembrane segment spans residues 73-93 (WQFTLFLASMAGVGAFTFYEL). Residues 94–106 (YFTSDYVKGLHRV) are Extracellular-facing. A helical transmembrane segment spans residues 107-127 (ILQFTLSFISITVVLFHISGQ). The Cytoplasmic segment spans residues 128-259 (YRRTIVIPRR…QAHELRPKSE (132 aa)).

In terms of assembly, component of the NEM1-SPO7 complex.

The protein resides in the endoplasmic reticulum membrane. The protein localises to the nucleus membrane. Its function is as follows. Regulatory component of the NEM1-SPO7 complex which acts as a phosphatase and dephosphorylates the phosphatidic acid phosphohydrolase PAH1. Essential for the formation of a spherical nucleus and meiotic division. The NEM1-SPOo7 protein phosphatase is required for efficient mitophagy under prolonged respiration, as well as for reticulophagy and pexophagy. This is Sporulation-specific protein SPO7 (SPO7) from Saccharomyces cerevisiae (strain ATCC 204508 / S288c) (Baker's yeast).